Here is an 876-residue protein sequence, read N- to C-terminus: Translation initiation factor IF-2 (876 aa).

The disordered stretch occupies residues 164-288 (VEIKEPEEPA…EEPAPHAFSA (125 aa)). A compositionally biased stretch (low complexity) spans 179 to 219 (AAPVAGPEAVPVAPETPSAAPGETVAAVEAEAAPSQPASTE). Residues 244–259 (VWKEEKVEKRGLKTRG) show a composition bias toward basic and acidic residues. In terms of domain architecture, tr-type G spans 378 to 547 (ARAPVVTVMG…LLQAEVLELK (170 aa)). The G1 stretch occupies residues 387 to 394 (GHVDHGKT). 387–394 (GHVDHGKT) is a binding site for GTP. The tract at residues 412–416 (GITQH) is G2. Residues 433–436 (DTPG) are G3. GTP-binding positions include 433–437 (DTPGH) and 487–490 (TKID). A G4 region spans residues 487-490 (TKID). Positions 523–525 (SAK) are G5.

The protein belongs to the TRAFAC class translation factor GTPase superfamily. Classic translation factor GTPase family. IF-2 subfamily.

Its subcellular location is the cytoplasm. In terms of biological role, one of the essential components for the initiation of protein synthesis. Protects formylmethionyl-tRNA from spontaneous hydrolysis and promotes its binding to the 30S ribosomal subunits. Also involved in the hydrolysis of GTP during the formation of the 70S ribosomal complex. This Nitrosospira multiformis (strain ATCC 25196 / NCIMB 11849 / C 71) protein is Translation initiation factor IF-2.